We begin with the raw amino-acid sequence, 312 residues long: L-lactate dehydrogenase (312 aa).

The NAD(+) site is built by V14, D35, and Y66. Substrate contacts are provided by residues Q83, R90, and 122-125 (NPVD). NAD(+) is bound by residues 120–122 (ASN) and S145. 150-153 (DSAR) is a substrate binding site. Catalysis depends on H177, which acts as the Proton acceptor. Position 220 is a phosphotyrosine (Y220). T229 contributes to the substrate binding site.

The protein belongs to the LDH/MDH superfamily. LDH family. As to quaternary structure, homotetramer.

The protein resides in the cytoplasm. The enzyme catalyses (S)-lactate + NAD(+) = pyruvate + NADH + H(+). It functions in the pathway fermentation; pyruvate fermentation to lactate; (S)-lactate from pyruvate: step 1/1. Its function is as follows. Catalyzes the conversion of lactate to pyruvate. The protein is L-lactate dehydrogenase of Mycoplasma pneumoniae (strain ATCC 29342 / M129 / Subtype 1) (Mycoplasmoides pneumoniae).